The chain runs to 97 residues: Protein Vpr (97 aa).

Positions 1 to 42 (MEQAPEDQGPQREPYNEWTLELLEELKREAVRHFPRPWLHSL) are homooligomerization. Residues Ser79, Ser95, and Ser97 each carry the phosphoserine; by host modification.

Belongs to the HIV-1 VPR protein family. Homooligomer, may form homodimer. Interacts with p6-gag region of the Pr55 Gag precursor protein through a (Leu-X-X)4 motif near the C-terminus of the P6gag protein. Interacts with host UNG. May interact with host RAD23A/HHR23A. Interacts with host VPRBP/DCAF1, leading to hijack the CUL4A-RBX1-DDB1-DCAF1/VPRBP complex, mediating ubiquitination of host proteins such as TERT and ZGPAT and arrest of the cell cycle in G2 phase. Phosphorylated on several residues by host. These phosphorylations regulate VPR activity for the nuclear import of the HIV-1 pre-integration complex.

It localises to the virion. Its subcellular location is the host nucleus. The protein localises to the host extracellular space. In terms of biological role, during virus replication, may deplete host UNG protein, and incude G2-M cell cycle arrest. Acts by targeting specific host proteins for degradation by the 26S proteasome, through association with the cellular CUL4A-DDB1 E3 ligase complex by direct interaction with host VPRPB/DCAF-1. Cell cycle arrest reportedly occurs within hours of infection and is not blocked by antiviral agents, suggesting that it is initiated by the VPR carried into the virion. Additionally, VPR induces apoptosis in a cell cycle dependent manner suggesting that these two effects are mechanistically linked. Detected in the serum and cerebrospinal fluid of AIDS patient, VPR may also induce cell death to bystander cells. Its function is as follows. During virus entry, plays a role in the transport of the viral pre-integration (PIC) complex to the host nucleus. This function is crucial for viral infection of non-dividing macrophages. May act directly at the nuclear pore complex, by binding nucleoporins phenylalanine-glycine (FG)-repeat regions. The protein is Protein Vpr of Human immunodeficiency virus type 1 group M subtype B (isolate ARV2/SF2) (HIV-1).